A 300-amino-acid polypeptide reads, in one-letter code: Putative zinc finger protein 705EP (300 aa).

Residues 7–78 (VTFEDVAIDF…GREFLQDQNP (72 aa)) form the KRAB domain. The segment at 172–194 (YQCNLCEKAYTNCFHLRRPKMTH) adopts a C2H2-type 1; degenerate zinc-finger fold. 2 C2H2-type zinc fingers span residues 200–222 (YTCH…EKTH) and 228–250 (YKCH…ERTH). A C2H2-type 4; degenerate zinc finger spans residues 256–278 (YECDNSGKAFSQSSGFRGNKIIH).

Belongs to the krueppel C2H2-type zinc-finger protein family.

It localises to the nucleus. Its function is as follows. May be involved in transcriptional regulation. This chain is Putative zinc finger protein 705EP, found in Homo sapiens (Human).